Here is a 436-residue protein sequence, read N- to C-terminus: Hydroxycinnamoyltransferase (436 aa).

Catalysis depends on proton acceptor residues His-154 and Asp-383.

The protein belongs to the plant acyltransferase family. As to expression, mostly expressed in stems, and, to a lower extent, in bulbs.

It functions in the pathway phenylpropanoid metabolism. Hydroxycinnamoyl transferase that catalyzes the transfer of an acyl from p-coumaryol-CoA to various acyl acceptors. Can use feruloyl-CoA and caffeoyl-CoA as acyl donors. The chain is Hydroxycinnamoyltransferase from Narcissus pseudonarcissus (Daffodil).